The chain runs to 495 residues: Transcription termination/antitermination protein NusA (495 aa).

The S1 motif domain occupies 135 to 200 (GKIVTGTVKK…KTAQLFVTRS (66 aa)). Positions 302 to 374 (NHSMDIAVEA…LDEEFAQILV (73 aa)) constitute a KH domain.

This sequence belongs to the NusA family. As to quaternary structure, monomer. Binds directly to the core enzyme of the DNA-dependent RNA polymerase and to nascent RNA.

Its subcellular location is the cytoplasm. In terms of biological role, participates in both transcription termination and antitermination. The protein is Transcription termination/antitermination protein NusA of Haemophilus influenzae (strain ATCC 51907 / DSM 11121 / KW20 / Rd).